The sequence spans 240 residues: Glutathione S-transferase theta-1 (240 aa).

Positions 2 to 82 (VLELYLDLLS…YLAHKYKVPD (81 aa)) constitute a GST N-terminal domain. Glutathione-binding positions include H40, 53-54 (KV), and 66-67 (ES). In terms of domain architecture, GST C-terminal spans 88-223 (DLQARARVDE…ILKVRDCPPA (136 aa)).

Belongs to the GST superfamily. Theta family. In terms of assembly, homodimer. In liver, highest expression found in central vein limiting plate hepatocytes. In lung, expressed mainly in club cells of the bronchiolar epithelium and, at low levels, in type II alveolar cells.

The protein localises to the cytoplasm. It carries out the reaction RX + glutathione = an S-substituted glutathione + a halide anion + H(+). Its function is as follows. Conjugation of reduced glutathione to a wide number of exogenous and endogenous hydrophobic electrophiles. Also binds steroids, bilirubin, carcinogens and numerous organic anions. Has dichloromethane dehalogenase activity. The polypeptide is Glutathione S-transferase theta-1 (Gstt1) (Rattus norvegicus (Rat)).